Consider the following 409-residue polypeptide: Tryptophan synthase beta chain (409 aa).

K86 carries the post-translational modification N6-(pyridoxal phosphate)lysine.

The protein belongs to the TrpB family. Tetramer of two alpha and two beta chains. Requires pyridoxal 5'-phosphate as cofactor.

It catalyses the reaction (1S,2R)-1-C-(indol-3-yl)glycerol 3-phosphate + L-serine = D-glyceraldehyde 3-phosphate + L-tryptophan + H2O. It participates in amino-acid biosynthesis; L-tryptophan biosynthesis; L-tryptophan from chorismate: step 5/5. The beta subunit is responsible for the synthesis of L-tryptophan from indole and L-serine. The polypeptide is Tryptophan synthase beta chain (Shewanella pealeana (strain ATCC 700345 / ANG-SQ1)).